We begin with the raw amino-acid sequence, 323 residues long: Breast cancer metastasis-suppressor 1-like protein (323 aa).

Residues 1 to 17 show a composition bias toward basic and acidic residues; that stretch reads MPVHSRGDKKETNHHDE. Residues 1-56 are disordered; it reads MPVHSRGDKKETNHHDEMEVDYAENEGSSSEDEDTESSSVSEDGDSSEMDDEDCER. Positions 18 to 53 are enriched in acidic residues; it reads MEVDYAENEGSSSEDEDTESSSVSEDGDSSEMDDED. 2 coiled-coil regions span residues 52–84 and 149–180; these read EDCE…KERL and EKLL…ITSE. Serine 197 is modified (phosphoserine). Glycyl lysine isopeptide (Lys-Gly) (interchain with G-Cter in SUMO2) cross-links involve residues lysine 240 and lysine 246.

It belongs to the BRMS1 family. In terms of assembly, component of the Sin3/HDAC1 corepressor complex at least composed of BRMS1, BRMS1L and ING2/ING1L. Interacts with HDAC and SIN3A.

The protein localises to the nucleus. Functionally, involved in the histone deacetylase (HDAC1)-dependent transcriptional repression activity. When overexpressed in lung cancer cell line that lacks p53/TP53 expression, inhibits cell growth. This Bos taurus (Bovine) protein is Breast cancer metastasis-suppressor 1-like protein (BRMS1L).